The sequence spans 137 residues: Small ribosomal subunit protein uS12 (137 aa).

Residues 1-57 (MPTINQLIRKGRKSKGSKSNSPALNFGYNSYKKVQTNNSAPQKRGVATRVGTMTPKK) are disordered. Polar residues predominate over residues 32–41 (KKVQTNNSAP). Asp-102 carries the post-translational modification 3-methylthioaspartic acid.

Belongs to the universal ribosomal protein uS12 family. In terms of assembly, part of the 30S ribosomal subunit. Contacts proteins S8 and S17. May interact with IF1 in the 30S initiation complex.

In terms of biological role, with S4 and S5 plays an important role in translational accuracy. Its function is as follows. Interacts with and stabilizes bases of the 16S rRNA that are involved in tRNA selection in the A site and with the mRNA backbone. Located at the interface of the 30S and 50S subunits, it traverses the body of the 30S subunit contacting proteins on the other side and probably holding the rRNA structure together. The combined cluster of proteins S8, S12 and S17 appears to hold together the shoulder and platform of the 30S subunit. This chain is Small ribosomal subunit protein uS12, found in Ligilactobacillus salivarius (strain UCC118) (Lactobacillus salivarius).